A 342-amino-acid chain; its full sequence is Serine/threonine-protein kinase SAPK1 (342 aa).

The Protein kinase domain occupies 4 to 260 (YEVMRDIGSG…IPEIKNHPWF (257 aa)). ATP is bound by residues 10–18 (IGSGNFGVA) and lysine 33. The active-site Proton acceptor is aspartate 123. The interval 253–342 (EIKNHPWFLK…ENSGDFVCAL (90 aa)) is C-terminal.

The protein belongs to the protein kinase superfamily. Ser/Thr protein kinase family. Post-translationally, phosphorylated. Expressed in leaf blades, leaf sheaths and roots. Expressed in shoots and roots of young seedlings.

It catalyses the reaction L-seryl-[protein] + ATP = O-phospho-L-seryl-[protein] + ADP + H(+). The catalysed reaction is L-threonyl-[protein] + ATP = O-phospho-L-threonyl-[protein] + ADP + H(+). With respect to regulation, activated by phosphorylation in response to hyperosmotic stress within 5 minutes. May play a role in signal transduction of hyperosmotic response. The polypeptide is Serine/threonine-protein kinase SAPK1 (SAPK1) (Oryza sativa subsp. japonica (Rice)).